The chain runs to 463 residues: Argininosuccinate lyase (463 aa).

Belongs to the lyase 1 family. Argininosuccinate lyase subfamily.

Its subcellular location is the cytoplasm. It carries out the reaction 2-(N(omega)-L-arginino)succinate = fumarate + L-arginine. Its pathway is amino-acid biosynthesis; L-arginine biosynthesis; L-arginine from L-ornithine and carbamoyl phosphate: step 3/3. This is Argininosuccinate lyase from Thermosynechococcus vestitus (strain NIES-2133 / IAM M-273 / BP-1).